Reading from the N-terminus, the 133-residue chain is UPF0102 protein ABSDF1354 (133 aa).

It belongs to the UPF0102 family.

The protein is UPF0102 protein ABSDF1354 of Acinetobacter baumannii (strain SDF).